A 227-amino-acid chain; its full sequence is Enolase-phosphatase E1 (227 aa).

This sequence belongs to the HAD-like hydrolase superfamily. MasA/MtnC family. In terms of assembly, monomer. It depends on Mg(2+) as a cofactor.

It catalyses the reaction 5-methylsulfanyl-2,3-dioxopentyl phosphate + H2O = 1,2-dihydroxy-5-(methylsulfanyl)pent-1-en-3-one + phosphate. It functions in the pathway amino-acid biosynthesis; L-methionine biosynthesis via salvage pathway; L-methionine from S-methyl-5-thio-alpha-D-ribose 1-phosphate: step 3/6. It participates in amino-acid biosynthesis; L-methionine biosynthesis via salvage pathway; L-methionine from S-methyl-5-thio-alpha-D-ribose 1-phosphate: step 4/6. Functionally, bifunctional enzyme that catalyzes the enolization of 2,3-diketo-5-methylthiopentyl-1-phosphate (DK-MTP-1-P) into the intermediate 2-hydroxy-3-keto-5-methylthiopentenyl-1-phosphate (HK-MTPenyl-1-P), which is then dephosphorylated to form the acireductone 1,2-dihydroxy-3-keto-5-methylthiopentene (DHK-MTPene). The chain is Enolase-phosphatase E1 from Persephonella marina (strain DSM 14350 / EX-H1).